Consider the following 77-residue polypeptide: Defensin-like protein 1 (77 aa).

The signal sequence occupies residues 1-30; the sequence is MKLSVRFISAALLLFMVFIATGMGPVTVEA. Intrachain disulfides connect Cys33–Cys77, Cys44–Cys64, Cys50–Cys71, and Cys54–Cys73.

The protein belongs to the DEFL family. In terms of tissue distribution, expressed in the whole plant except roots.

The protein localises to the secreted. In terms of biological role, confers broad-spectrum resistance to pathogens. The polypeptide is Defensin-like protein 1 (PDF2.3) (Arabidopsis thaliana (Mouse-ear cress)).